A 356-amino-acid chain; its full sequence is Protein trichome birefringence-like 41 (356 aa).

The chain crosses the membrane as a helical; Signal-anchor for type II membrane protein span at residues 12–31 (SALVLSLLLLLLLPLLHEAA). Positions 107-109 (GDS) match the GDS motif motif. A DCXHWCLPGXXDXWN motif motif is present at residues 333–347 (DCSHWCLSGVPDTWN).

Belongs to the PC-esterase family. TBL subfamily.

It localises to the membrane. Its function is as follows. May act as a bridging protein that binds pectin and other cell wall polysaccharides. Probably involved in maintaining esterification of pectins. May be involved in the specific O-acetylation of cell wall polymers. This Arabidopsis thaliana (Mouse-ear cress) protein is Protein trichome birefringence-like 41 (TBL41).